Reading from the N-terminus, the 111-residue chain is Propane 2-monooxygenase, effector component (111 aa).

Belongs to the TmoD/XamoD family. In terms of assembly, the propane 2-monooxygenase multicomponent enzyme system is composed of an electron transfer component and a monooxygenase component interacting with the effector protein PrmD. The electron transfer component is composed of a reductase (PrmB), and the monooxygenase component is formed by a large subunit (PrmA) and a small subunit (PrmC).

Effector component of the propane 2-monooxygenase multicomponent enzyme system which is involved in the degradation of propane via the O2-dependent hydroxylation of propane. In Gordonia sp. (strain TY-5), this protein is Propane 2-monooxygenase, effector component.